Reading from the N-terminus, the 487-residue chain is L-tartrate/succinate antiporter (487 aa).

The next 14 helical transmembrane spans lie at 10 to 30, 33 to 53, 54 to 74, 93 to 113, 137 to 157, 189 to 209, 236 to 256, 292 to 312, 313 to 333, 340 to 360, 370 to 390, 393 to 413, 418 to 438, and 465 to 485; these read YLAP…AGLE, TWLY…EPVP, GAVV…WLLF, WAVS…FMFG, TLFL…VTPS, IGSY…AIFL, FLGM…LAYV, LMVG…AAMV, GYSV…DIVS, VFFW…TGFI, SLSG…FYLL, FFAS…AAAL, IPLP…SILT, and IFGL…MPVV.

This sequence belongs to the SLC13A/DASS transporter (TC 2.A.47) family. DIT1 subfamily.

It localises to the cell inner membrane. It catalyses the reaction (2R,3R)-tartrate(out) + succinate(in) = (2R,3R)-tartrate(in) + succinate(out). Functionally, catalyzes the uptake of tartrate in exchange for intracellular succinate. Essential for anaerobic L-tartrate fermentation. This Shigella flexneri protein is L-tartrate/succinate antiporter (ttdT).